Consider the following 121-residue polypeptide: Large ribosomal subunit protein bL12 (121 aa).

Belongs to the bacterial ribosomal protein bL12 family. As to quaternary structure, homodimer. Part of the ribosomal stalk of the 50S ribosomal subunit. Forms a multimeric L10(L12)X complex, where L10 forms an elongated spine to which 2 to 4 L12 dimers bind in a sequential fashion. Binds GTP-bound translation factors.

Forms part of the ribosomal stalk which helps the ribosome interact with GTP-bound translation factors. Is thus essential for accurate translation. This is Large ribosomal subunit protein bL12 from Streptococcus agalactiae serotype Ia (strain ATCC 27591 / A909 / CDC SS700).